The primary structure comprises 91 residues: Bacterial microcompartment shell vertex protein PduN (91 aa).

The 87-residue stretch at 1–87 (MHLARVTGAV…IDLAVVGIVD (87 aa)) folds into the BMV domain.

It belongs to the CcmL/EutN family. Homopentamer. Interacts with shell protein PduA.

The protein localises to the bacterial microcompartment. It participates in polyol metabolism; 1,2-propanediol degradation. In terms of biological role, probably forms vertices in the shell of the bacterial microcompartment (BMC) dedicated to 1,2-propanediol (1,2-PD) degradation. Required for structural integrity of BMCs and to mitigate propionaldehyde toxicity. Functionally, the 1,2-PD-specific bacterial microcompartment (BMC) concentrates low levels of 1,2-PD catabolic enzymes, concentrates volatile reaction intermediates thus enhancing pathway flux and keeps the level of toxic, mutagenic propionaldehyde low. In Salmonella typhimurium (strain LT2 / SGSC1412 / ATCC 700720), this protein is Bacterial microcompartment shell vertex protein PduN.